Here is a 354-residue protein sequence, read N- to C-terminus: Uroporphyrinogen decarboxylase (354 aa).

Substrate-binding positions include 25–29 (RQAGR), F44, D75, Y152, T207, and H330.

The protein belongs to the uroporphyrinogen decarboxylase family. In terms of assembly, homodimer.

The protein resides in the cytoplasm. The enzyme catalyses uroporphyrinogen III + 4 H(+) = coproporphyrinogen III + 4 CO2. The protein operates within porphyrin-containing compound metabolism; protoporphyrin-IX biosynthesis; coproporphyrinogen-III from 5-aminolevulinate: step 4/4. Catalyzes the decarboxylation of four acetate groups of uroporphyrinogen-III to yield coproporphyrinogen-III. The sequence is that of Uroporphyrinogen decarboxylase from Xanthomonas axonopodis pv. citri (strain 306).